A 622-amino-acid chain; its full sequence is Elongation factor 4 (622 aa).

Residues 17 to 201 (ALIRNFCIIA…KVVAEVPAPV (185 aa)) enclose the tr-type G domain. Residues 29–34 (DHGKST) and 148–151 (NKID) each bind GTP.

It belongs to the TRAFAC class translation factor GTPase superfamily. Classic translation factor GTPase family. LepA subfamily.

The protein localises to the cell membrane. The catalysed reaction is GTP + H2O = GDP + phosphate + H(+). Its function is as follows. Required for accurate and efficient protein synthesis under certain stress conditions. May act as a fidelity factor of the translation reaction, by catalyzing a one-codon backward translocation of tRNAs on improperly translocated ribosomes. Back-translocation proceeds from a post-translocation (POST) complex to a pre-translocation (PRE) complex, thus giving elongation factor G a second chance to translocate the tRNAs correctly. Binds to ribosomes in a GTP-dependent manner. In Streptomyces coelicolor (strain ATCC BAA-471 / A3(2) / M145), this protein is Elongation factor 4.